A 465-amino-acid polypeptide reads, in one-letter code: Putative ABC transporter ATP-binding protein MG065 homolog (465 aa).

In terms of domain architecture, ABC transporter spans 232 to 465 (IELKNVYKYI…PKQVEDINWI (234 aa)). 268-275 (GPSGSGKT) provides a ligand contact to ATP.

This sequence belongs to the ABC transporter superfamily.

The polypeptide is Putative ABC transporter ATP-binding protein MG065 homolog (Mycoplasma pneumoniae (strain ATCC 29342 / M129 / Subtype 1) (Mycoplasmoides pneumoniae)).